Reading from the N-terminus, the 315-residue chain is 4-diphosphocytidyl-2-C-methyl-D-erythritol kinase (315 aa).

Lys8 is a catalytic residue. 93-103 (PVAAGLAGGSS) is an ATP binding site. Asp135 is an active-site residue.

This sequence belongs to the GHMP kinase family. IspE subfamily.

It catalyses the reaction 4-CDP-2-C-methyl-D-erythritol + ATP = 4-CDP-2-C-methyl-D-erythritol 2-phosphate + ADP + H(+). The protein operates within isoprenoid biosynthesis; isopentenyl diphosphate biosynthesis via DXP pathway; isopentenyl diphosphate from 1-deoxy-D-xylulose 5-phosphate: step 3/6. Catalyzes the phosphorylation of the position 2 hydroxy group of 4-diphosphocytidyl-2C-methyl-D-erythritol. This is 4-diphosphocytidyl-2-C-methyl-D-erythritol kinase from Heliobacterium modesticaldum (strain ATCC 51547 / Ice1).